A 441-amino-acid chain; its full sequence is Divalent metal cation transporter MntH (441 aa).

Transmembrane regions (helical) follow at residues 41–61 (TGIA…IGYM), 74–94 (AAYG…AMLF), 116–136 (HFPA…AMAT), 141–161 (FLGG…AGMI), 183–203 (AAIA…LMIA), 223–243 (AALT…TLYL), 271–291 (VVVA…MAAS), 311–331 (IPVL…TSGV), 360–380 (AVTI…TRAM), 381–401 (VASQ…LLIL), and 419–439 (IVAG…VWAA).

The protein belongs to the NRAMP family.

It localises to the cell inner membrane. In terms of biological role, h(+)-stimulated, divalent metal cation uptake system. This is Divalent metal cation transporter MntH from Burkholderia ambifaria (strain ATCC BAA-244 / DSM 16087 / CCUG 44356 / LMG 19182 / AMMD) (Burkholderia cepacia (strain AMMD)).